The primary structure comprises 330 residues: tRNA-modifying protein YgfZ (330 aa).

Folate contacts are provided by Trp28 and Trp190.

This sequence belongs to the tRNA-modifying YgfZ family.

It localises to the cytoplasm. Its function is as follows. Folate-binding protein involved in regulating the level of ATP-DnaA and in the modification of some tRNAs. It is probably a key factor in regulatory networks that act via tRNA modification, such as initiation of chromosomal replication. The sequence is that of tRNA-modifying protein YgfZ from Yersinia pestis bv. Antiqua (strain Antiqua).